Here is a 270-residue protein sequence, read N- to C-terminus: Putative phosphoenolpyruvate synthase regulatory protein (270 aa).

Gly-150–Thr-157 contributes to the ADP binding site.

It belongs to the pyruvate, phosphate/water dikinase regulatory protein family. PSRP subfamily.

The catalysed reaction is [pyruvate, water dikinase] + ADP = [pyruvate, water dikinase]-phosphate + AMP + H(+). It carries out the reaction [pyruvate, water dikinase]-phosphate + phosphate + H(+) = [pyruvate, water dikinase] + diphosphate. In terms of biological role, bifunctional serine/threonine kinase and phosphorylase involved in the regulation of the phosphoenolpyruvate synthase (PEPS) by catalyzing its phosphorylation/dephosphorylation. The polypeptide is Putative phosphoenolpyruvate synthase regulatory protein (Shewanella oneidensis (strain ATCC 700550 / JCM 31522 / CIP 106686 / LMG 19005 / NCIMB 14063 / MR-1)).